The chain runs to 233 residues: Gamma-glutamyl-hercynylcysteine sulfoxide hydrolase (233 aa).

Cys-2 functions as the Nucleophile in the catalytic mechanism. In terms of domain architecture, Glutamine amidotransferase type-2 spans Cys-2–Arg-233.

The catalysed reaction is gamma-L-glutamyl-hercynylcysteine S-oxide + H2O = S-(hercyn-2-yl)-L-cysteine S-oxide + L-glutamate. Its pathway is amino-acid biosynthesis; ergothioneine biosynthesis. In terms of biological role, catalyzes the hydrolysis of the gamma-glutamyl amide bond of hercynyl-gamma-L-glutamyl-L-cysteine sulfoxide to produce hercynylcysteine sulfoxide, a step in the biosynthesis pathway of ergothioneine. ERG is one of the major redox buffers which protects bacteria against redox stressors and antibiotics; loss of ERG or mycothiol (MSH, the other major redox buffer in this bacteria) leads to respiratory alterations and bioenergetic deficiencies that negatively impact virulence. The chain is Gamma-glutamyl-hercynylcysteine sulfoxide hydrolase from Mycobacterium tuberculosis (strain CDC 1551 / Oshkosh).